Reading from the N-terminus, the 133-residue chain is MAGSQRLKRMADSVQRELSELIRQELKDPRLGGLVTISAVKVSADMGYAEVYVTVMGRELGDEQSEAANKETLDVLNKASGFLRHELSRRIKTRITPRLRFHYDKTNAYGNYMFGLIEKAVQDLPEQSSEDKS.

This sequence belongs to the RbfA family. In terms of assembly, monomer. Binds 30S ribosomal subunits, but not 50S ribosomal subunits or 70S ribosomes.

Its subcellular location is the cytoplasm. One of several proteins that assist in the late maturation steps of the functional core of the 30S ribosomal subunit. Associates with free 30S ribosomal subunits (but not with 30S subunits that are part of 70S ribosomes or polysomes). Required for efficient processing of 16S rRNA. May interact with the 5'-terminal helix region of 16S rRNA. The chain is Ribosome-binding factor A from Acinetobacter baylyi (strain ATCC 33305 / BD413 / ADP1).